We begin with the raw amino-acid sequence, 362 residues long: 3-dehydroquinate synthase (362 aa).

NAD(+)-binding positions include Asp-71–Lys-76, Gly-105–Asp-109, Thr-129–Thr-130, Lys-142, Lys-151, and Cys-169–Thr-172. Zn(2+) contacts are provided by Glu-184, His-247, and His-264.

This sequence belongs to the sugar phosphate cyclases superfamily. Dehydroquinate synthase family. Co(2+) is required as a cofactor. It depends on Zn(2+) as a cofactor. The cofactor is NAD(+).

It is found in the cytoplasm. It carries out the reaction 7-phospho-2-dehydro-3-deoxy-D-arabino-heptonate = 3-dehydroquinate + phosphate. The protein operates within metabolic intermediate biosynthesis; chorismate biosynthesis; chorismate from D-erythrose 4-phosphate and phosphoenolpyruvate: step 2/7. In terms of biological role, catalyzes the conversion of 3-deoxy-D-arabino-heptulosonate 7-phosphate (DAHP) to dehydroquinate (DHQ). This chain is 3-dehydroquinate synthase, found in Escherichia coli O127:H6 (strain E2348/69 / EPEC).